Reading from the N-terminus, the 333-residue chain is Fructose-1,6-bisphosphatase class 1 (333 aa).

Residues E90, D112, L114, and D115 each coordinate Mg(2+). Substrate contacts are provided by residues D115–S118, N207, and K273. E279 lines the Mg(2+) pocket.

It belongs to the FBPase class 1 family. In terms of assembly, homotetramer. Mg(2+) serves as cofactor.

Its subcellular location is the cytoplasm. The enzyme catalyses beta-D-fructose 1,6-bisphosphate + H2O = beta-D-fructose 6-phosphate + phosphate. It participates in carbohydrate biosynthesis; gluconeogenesis. The protein is Fructose-1,6-bisphosphatase class 1 of Azoarcus sp. (strain BH72).